The sequence spans 296 residues: Regulatory protein PchR (296 aa).

The region spanning 201-296 (HAARDLLVGA…RYGISPSEIR (96 aa)) is the HTH araC/xylS-type domain. DNA-binding regions (H-T-H motif) lie at residues 218–239 (DTLASRVGMNPRKLTAGFRKVF) and 266–288 (VSTVAYRVGYSPAHFSIAFRKRY).

Its function is as follows. Positive activator of the genes for pyochelin and ferripyochelin receptors. In Pseudomonas aeruginosa (strain ATCC 15692 / DSM 22644 / CIP 104116 / JCM 14847 / LMG 12228 / 1C / PRS 101 / PAO1), this protein is Regulatory protein PchR (pchR).